The following is a 264-amino-acid chain: 3-methyl-2-oxobutanoate hydroxymethyltransferase (264 aa).

Mg(2+) is bound by residues aspartate 45 and aspartate 84. Residues 45-46, aspartate 84, and lysine 112 contribute to the 3-methyl-2-oxobutanoate site; that span reads DS. Glutamate 114 is a binding site for Mg(2+). Glutamate 181 (proton acceptor) is an active-site residue.

It belongs to the PanB family. As to quaternary structure, homodecamer; pentamer of dimers. Mg(2+) is required as a cofactor.

The protein localises to the cytoplasm. It catalyses the reaction 3-methyl-2-oxobutanoate + (6R)-5,10-methylene-5,6,7,8-tetrahydrofolate + H2O = 2-dehydropantoate + (6S)-5,6,7,8-tetrahydrofolate. The protein operates within cofactor biosynthesis; (R)-pantothenate biosynthesis; (R)-pantoate from 3-methyl-2-oxobutanoate: step 1/2. Its function is as follows. Catalyzes the reversible reaction in which hydroxymethyl group from 5,10-methylenetetrahydrofolate is transferred onto alpha-ketoisovalerate to form ketopantoate. In Shewanella sediminis (strain HAW-EB3), this protein is 3-methyl-2-oxobutanoate hydroxymethyltransferase.